Reading from the N-terminus, the 1415-residue chain is Non-structural polyprotein 1AB (1415 aa).

Residues 104–142 (KLIHKANALQERLRLSQEEKATLALDVQFLQHENVRLKE) are a coiled coil. 5 helical membrane-spanning segments follow: residues 154–174 (MKWI…GGYA), 239–259 (VFYY…LAIG), 286–306 (VLPT…TLMV), 313–333 (LLAI…LCFM), and 344–364 (GLIA…LTGT). Catalysis depends on charge relay system; for serine protease activity residues His-461, Asp-489, and Ser-551. Positions 587–616 (VKAPSRVELLKEEIERLKAQLNSAAENPAT) form a coiled coil. An O-(5'-phospho-RNA)-tyrosine modification is found at Tyr-693. Residues 753–813 (FDQAKPTPAP…KNEPQPYSQT (61 aa)) form a disordered region. Residues 783–795 (SQKKEKQLEHEQQ) are compositionally biased toward basic and acidic residues. The segment covering 800–813 (TKPQKNEPQPYSQT) has biased composition (polar residues). The 127-residue stretch at 1160–1286 (KHFIEFDWTR…TTPSVPDDYE (127 aa)) folds into the RdRp catalytic domain.

Belongs to the astroviridae polyprotein 1AB family. Monomer. In terms of processing, cleaved by the viral and host proteases. The protease is probably autocatalytically cleaved.

Its subcellular location is the host membrane. The enzyme catalyses RNA(n) + a ribonucleoside 5'-triphosphate = RNA(n+1) + diphosphate. Its function is as follows. Responsible for the cleavage of the polyprotein into functional products. In terms of biological role, covalently attached to the 5' extremity of the genomic and subgenomic RNAs. It may serve as a primer for the replicase. This is Non-structural polyprotein 1AB (ORF1) from Human astrovirus-4 (HAstV-4).